A 460-amino-acid polypeptide reads, in one-letter code: Malonyl-coenzyme A:anthocyanin 3-O-glucoside-6''-O-malonyltransferase (460 aa).

Active-site proton acceptor residues include H173 and D400.

The protein belongs to the plant acyltransferase family.

The catalysed reaction is an anthocyanidin 3-O-beta-D-glucoside + malonyl-CoA = an anthocyanidin 3-O-(6-O-malonyl-beta-D-glucoside) + CoA. With respect to regulation, completely inhibited by 5 mM N-ethylmaleimide or 0.1 mM Cu(2+). Partially inhibited by 0.1 mM Fe(2+) or 0.1 mM Hg(2+). Functionally, catalyzes the transfer of the malonyl group from malonyl-CoA to pelargonidin 3-O-glucoside to produce pelargonidin 3-O-6''-O-malonylglucoside. Can also transfer the malonyl group from malonyl-CoA to cyanidin 3-O-glucoside, delphinidin 3-O-glucoside and quercetin 3-O-glucoside. The protein is Malonyl-coenzyme A:anthocyanin 3-O-glucoside-6''-O-malonyltransferase of Dahlia pinnata (Pinnate dahlia).